Here is a 178-residue protein sequence, read N- to C-terminus: Large ribosomal subunit protein uL10 (178 aa).

This sequence belongs to the universal ribosomal protein uL10 family. As to quaternary structure, part of the ribosomal stalk of the 50S ribosomal subunit. The N-terminus interacts with L11 and the large rRNA to form the base of the stalk. The C-terminus forms an elongated spine to which L12 dimers bind in a sequential fashion forming a multimeric L10(L12)X complex.

Forms part of the ribosomal stalk, playing a central role in the interaction of the ribosome with GTP-bound translation factors. This Albidiferax ferrireducens (strain ATCC BAA-621 / DSM 15236 / T118) (Rhodoferax ferrireducens) protein is Large ribosomal subunit protein uL10.